A 491-amino-acid polypeptide reads, in one-letter code: Neuronal acetylcholine receptor subunit beta-2 (491 aa).

Positions methionine 1–cysteine 18 are cleaved as a signal peptide. Over threonine 19 to lysine 226 the chain is Extracellular. 2 N-linked (GlcNAc...) asparagine glycosylation sites follow: asparagine 44 and asparagine 161. Cysteine 148 and cysteine 162 are oxidised to a cystine. The chain crosses the membrane as a helical span at residues proline 227 to leucine 251. Residues proline 252 to lysine 258 are Cytoplasmic-facing. The chain crosses the membrane as a helical span at residues methionine 259–serine 277. Over lysine 278 to lysine 292 the chain is Extracellular. The chain crosses the membrane as a helical span at residues tyrosine 293–valine 314. Residues histidine 315–arginine 449 are Cytoplasmic-facing. The helical transmembrane segment at leucine 450–leucine 468 threads the bilayer.

This sequence belongs to the ligand-gated ion channel (TC 1.A.9) family. Acetylcholine receptor (TC 1.A.9.1) subfamily. Beta-2/CHRNB2 sub-subfamily. As to quaternary structure, neuronal AChR is a heteropentamer composed of two different types of subunits: alpha and beta. CHRNB2/Beta-2 subunit can be combined to CHRNA2/alpha-2, CHRNA3/alpha-3 or CHRNA4/alpha-4, CHRNA5/alpha-5, CHRNA6/alpha-6 and CHRNB3/beta-3 to give rise to functional receptors.

Its subcellular location is the synaptic cell membrane. The protein localises to the cell membrane. It catalyses the reaction Ca(2+)(in) = Ca(2+)(out). It carries out the reaction K(+)(in) = K(+)(out). The enzyme catalyses Na(+)(in) = Na(+)(out). Its activity is regulated as follows. Activated by a myriad of ligands such as acetylcholine, cytisine, nicotine, choline and epibatidine. nAChR activity is inhibited by the antagonist alpha-conotoxins BuIA, PnIA, PnIC, GID and MII, small disulfide-constrained peptides from cone snails. Its function is as follows. Component of neuronal acetylcholine receptors (nAChRs) that function as pentameric, ligand-gated cation channels with high calcium permeability among other activities. nAChRs are excitatory neurotrasnmitter receptors formed by a collection of nAChR subunits known to mediate synaptic transmission in the nervous system and the neuromuscular junction. Each nAchR subunit confers differential attributes to channel properties, including activation, deactivation and desensitization kinetics, pH sensitivity, cation permeability, and binding to allosteric modulators. CHRNB2 forms heteropentameric neuronal acetylcholine receptors with CHRNA2, CHRNA3, CHRNA4 and CHRNA6, as well as CHRNA5 and CHRNB3 as accesory subunits. In Gallus gallus (Chicken), this protein is Neuronal acetylcholine receptor subunit beta-2 (CHRNB2).